An 80-amino-acid chain; its full sequence is RNA-binding protein Hfq (80 aa).

In terms of domain architecture, Sm spans 10–69 (DPFLNVLRKEHIPVSIYLVNGIKLQGHIDSFDQYVVLLRNSVTQMVYKHAISTIVPGKAV).

Belongs to the Hfq family. In terms of assembly, homohexamer.

RNA chaperone that binds small regulatory RNA (sRNAs) and mRNAs to facilitate mRNA translational regulation in response to envelope stress, environmental stress and changes in metabolite concentrations. Also binds with high specificity to tRNAs. The polypeptide is RNA-binding protein Hfq (Nitrosomonas eutropha (strain DSM 101675 / C91 / Nm57)).